Here is a 120-residue protein sequence, read N- to C-terminus: Ribosome-binding factor A (120 aa).

Belongs to the RbfA family. In terms of assembly, monomer. Binds 30S ribosomal subunits, but not 50S ribosomal subunits or 70S ribosomes.

The protein localises to the cytoplasm. In terms of biological role, one of several proteins that assist in the late maturation steps of the functional core of the 30S ribosomal subunit. Associates with free 30S ribosomal subunits (but not with 30S subunits that are part of 70S ribosomes or polysomes). Required for efficient processing of 16S rRNA. May interact with the 5'-terminal helix region of 16S rRNA. The chain is Ribosome-binding factor A from Borrelia garinii subsp. bavariensis (strain ATCC BAA-2496 / DSM 23469 / PBi) (Borreliella bavariensis).